The chain runs to 476 residues: Aspartyl/glutamyl-tRNA(Asn/Gln) amidotransferase subunit B (476 aa).

Belongs to the GatB/GatE family. GatB subfamily. As to quaternary structure, heterotrimer of A, B and C subunits.

The enzyme catalyses L-glutamyl-tRNA(Gln) + L-glutamine + ATP + H2O = L-glutaminyl-tRNA(Gln) + L-glutamate + ADP + phosphate + H(+). It catalyses the reaction L-aspartyl-tRNA(Asn) + L-glutamine + ATP + H2O = L-asparaginyl-tRNA(Asn) + L-glutamate + ADP + phosphate + 2 H(+). In terms of biological role, allows the formation of correctly charged Asn-tRNA(Asn) or Gln-tRNA(Gln) through the transamidation of misacylated Asp-tRNA(Asn) or Glu-tRNA(Gln) in organisms which lack either or both of asparaginyl-tRNA or glutaminyl-tRNA synthetases. The reaction takes place in the presence of glutamine and ATP through an activated phospho-Asp-tRNA(Asn) or phospho-Glu-tRNA(Gln). The sequence is that of Aspartyl/glutamyl-tRNA(Asn/Gln) amidotransferase subunit B from Lacticaseibacillus casei (strain BL23) (Lactobacillus casei).